Consider the following 359-residue polypeptide: UbiA prenyltransferase domain-containing protein 1 homolog (359 aa).

A compositionally biased stretch (polar residues) spans 1–16; it reads MATSSQLLPNGNLSRN. The tract at residues 1-23 is disordered; it reads MATSSQLLPNGNLSRNGKTKTED. 8 consecutive transmembrane segments (helical) span residues 67-89, 98-118, 148-168, 177-197, 200-220, 262-284, 289-311, and 335-355; these read ALRP…LAYR, LATF…GNVV, VVSL…LLAV, LALI…GIGF, IALG…LFAF, IVTL…LLFA, FFIF…PQAF, and FFFG…PTFG.

The protein belongs to the UbiA prenyltransferase family.

It is found in the mitochondrion membrane. Its pathway is quinol/quinone metabolism; menaquinone biosynthesis. Prenyltransferase that mediates the formation of menaquinone-4 (MK-4), a vitamin K2 isoform, thereby acting as a mitochondrial electron carrier. Mediates the conversion of phylloquinone (PK) into MK-4, probably by cleaving the side chain of phylloquinone (PK) to release 2-methyl-1,4-naphthoquinone (menadione; K3) and then prenylating it with geranylgeranyl pyrophosphate (GGPP) to form MK-4. MK-4 acts as a membrane electron carrier downstream of a electron transport chain complex, improving mitochondrial oxygen consumption. The protein is UbiA prenyltransferase domain-containing protein 1 homolog (heix) of Drosophila melanogaster (Fruit fly).